A 279-amino-acid polypeptide reads, in one-letter code: Large ribosomal subunit protein uL2 (279 aa).

Disordered regions lie at residues Met-1–Lys-28 and Arg-221–Arg-279. Residues Gly-12 to Asp-22 show a composition bias toward polar residues.

The protein belongs to the universal ribosomal protein uL2 family. As to quaternary structure, part of the 50S ribosomal subunit. Forms a bridge to the 30S subunit in the 70S ribosome.

Its function is as follows. One of the primary rRNA binding proteins. Required for association of the 30S and 50S subunits to form the 70S ribosome, for tRNA binding and peptide bond formation. It has been suggested to have peptidyltransferase activity; this is somewhat controversial. Makes several contacts with the 16S rRNA in the 70S ribosome. The polypeptide is Large ribosomal subunit protein uL2 (Rubrobacter xylanophilus (strain DSM 9941 / JCM 11954 / NBRC 16129 / PRD-1)).